Consider the following 393-residue polypeptide: Putative bacilysin exporter BacE (393 aa).

10 helical membrane-spanning segments follow: residues 11–31 (LLFG…ALLI), 43–63 (SGVI…GVLV), 69–89 (VKIM…LTFL), 92–112 (GEYP…GVFF), 133–155 (LFAK…FLLG), 160–177 (LAVA…FFIS), 215–235 (MFTM…FPIV), 244–264 (IGNF…AALV), 287–307 (ALFL…LFFI), and 353–373 (IVDA…LFLH).

It belongs to the major facilitator superfamily.

The protein resides in the cell membrane. Functionally, part of the bacilysin biosynthesis operon. May be involved in self-resistance to bacilysin by permitting efflux of this antibiotic. This is Putative bacilysin exporter BacE (bacE) from Bacillus subtilis.